The chain runs to 77 residues: Small ribosomal subunit protein uS17 (77 aa).

This sequence belongs to the universal ribosomal protein uS17 family. In terms of assembly, part of the 30S ribosomal subunit.

In terms of biological role, one of the primary rRNA binding proteins, it binds specifically to the 5'-end of 16S ribosomal RNA. In Wolbachia sp. subsp. Brugia malayi (strain TRS), this protein is Small ribosomal subunit protein uS17.